A 253-amino-acid chain; its full sequence is Allene oxide cyclase 2, chloroplastic (253 aa).

A chloroplast-targeting transit peptide spans 1-77 (MASSAVSLQS…SQNGNIENPR (77 aa)).

It belongs to the allene oxide cyclase family. Highly expressed in fully developed leaves.

Its subcellular location is the plastid. The protein resides in the chloroplast. It catalyses the reaction (9Z,13S,15Z)-12,13-epoxyoctadeca-9,11,15-trienoate = (9S,13S,15Z)-12-oxophyto-10,15-dienoate. Its function is as follows. Involved in the production of 12-oxo-phytodienoic acid (OPDA), a precursor of jasmonic acid. This chain is Allene oxide cyclase 2, chloroplastic (AOC2), found in Arabidopsis thaliana (Mouse-ear cress).